Consider the following 190-residue polypeptide: Lipid A acyltransferase PagP (190 aa).

The N-terminal stretch at 1–18 is a signal peptide; sequence MKRLISCLTIICALNASA. Catalysis depends on residues His-60, Asp-103, and Ser-104.

Belongs to the lipid A palmitoyltransferase family. Homodimer.

The protein resides in the cell outer membrane. It catalyses the reaction a lipid A + a 1,2-diacyl-sn-glycero-3-phosphocholine = a hepta-acyl lipid A + a 2-acyl-sn-glycero-3-phosphocholine. The enzyme catalyses a lipid IVA + a 1,2-diacyl-sn-glycero-3-phosphocholine = a lipid IVB + a 2-acyl-sn-glycero-3-phosphocholine. The catalysed reaction is a lipid IIA + a 1,2-diacyl-sn-glycero-3-phosphocholine = a lipid IIB + a 2-acyl-sn-glycero-3-phosphocholine. Transfers a fatty acid residue from the sn-1 position of a phospholipid to the N-linked hydroxyfatty acid chain on the proximal unit of lipid A or its precursors. The polypeptide is Lipid A acyltransferase PagP (Legionella pneumophila serogroup 1 (strain 2300/99 Alcoy)).